The primary structure comprises 309 residues: tRNA pseudouridine synthase B (309 aa).

The active-site Nucleophile is the Asp-52.

It belongs to the pseudouridine synthase TruB family. Type 1 subfamily.

It catalyses the reaction uridine(55) in tRNA = pseudouridine(55) in tRNA. Responsible for synthesis of pseudouridine from uracil-55 in the psi GC loop of transfer RNAs. The polypeptide is tRNA pseudouridine synthase B (Leptospira interrogans serogroup Icterohaemorrhagiae serovar Lai (strain 56601)).